Consider the following 587-residue polypeptide: Putative phagocytic receptor 1b (587 aa).

A signal peptide spans 1 to 23; that stretch reads MRLQILLIYLICIIVSSIVLVES. Transmembrane regions (helical) follow at residues 223–243, 294–314, 319–339, 354–374, 390–410, 448–468, 480–500, 524–544, and 556–576; these read LSVM…AIMI, IGWQ…FGMF, GGNM…ISGY, AWNI…VVIL, ILTM…LTVV, ILIA…YIFN, GILC…TVAL, VVFI…MYGL, and IVCF…SLIF.

This sequence belongs to the nonaspanin (TM9SF) (TC 9.A.2) family.

It is found in the membrane. Its function is as follows. Involved in adhesion and phagocytosis of hydrophilic particles. This is Putative phagocytic receptor 1b (phg1b) from Dictyostelium discoideum (Social amoeba).